The sequence spans 70 residues: Small ribosomal subunit protein bS21 (70 aa).

This sequence belongs to the bacterial ribosomal protein bS21 family.

The chain is Small ribosomal subunit protein bS21 from Methylobacillus flagellatus (strain ATCC 51484 / DSM 6875 / VKM B-1610 / KT).